Here is a 115-residue protein sequence, read N- to C-terminus: Guanylin (115 aa).

A signal peptide spans 1-21; the sequence is MNAFLLSALCLLGAWAALAGG. 3 disulfide bridges follow: Cys69–Cys82, Cys104–Cys112, and Cys107–Cys115.

This sequence belongs to the guanylin family. As to expression, highly expressed in ileum and colon. Found in plasma.

Its subcellular location is the secreted. Functionally, endogenous activator of intestinal guanylate cyclase. It stimulates this enzyme through the same receptor binding region as the heat-stable enterotoxins. The sequence is that of Guanylin (GUCA2A) from Homo sapiens (Human).